The primary structure comprises 244 residues: tRNA (guanine-N(7)-)-methyltransferase (244 aa).

4 residues coordinate S-adenosyl-L-methionine: Glu42, Asp67, Asp94, and Asp116. Residue Asp116 is part of the active site. Residues Lys120, Asp150, and 191 to 194 (TYYE) each bind substrate.

This sequence belongs to the class I-like SAM-binding methyltransferase superfamily. TrmB family.

It carries out the reaction guanosine(46) in tRNA + S-adenosyl-L-methionine = N(7)-methylguanosine(46) in tRNA + S-adenosyl-L-homocysteine. It functions in the pathway tRNA modification; N(7)-methylguanine-tRNA biosynthesis. Functionally, catalyzes the formation of N(7)-methylguanine at position 46 (m7G46) in tRNA. The sequence is that of tRNA (guanine-N(7)-)-methyltransferase from Porphyromonas gingivalis (strain ATCC BAA-308 / W83).